A 243-amino-acid polypeptide reads, in one-letter code: Carboxy-S-adenosyl-L-methionine synthase (243 aa).

Residues Tyr-40, Gly-65–Ser-67, Asp-90–Asn-91, Asp-118–Ile-119, Asn-133, and Arg-200 contribute to the S-adenosyl-L-methionine site.

This sequence belongs to the class I-like SAM-binding methyltransferase superfamily. Cx-SAM synthase family. Homodimer.

It carries out the reaction prephenate + S-adenosyl-L-methionine = carboxy-S-adenosyl-L-methionine + 3-phenylpyruvate + H2O. Its function is as follows. Catalyzes the conversion of S-adenosyl-L-methionine (SAM) to carboxy-S-adenosyl-L-methionine (Cx-SAM). This is Carboxy-S-adenosyl-L-methionine synthase from Shewanella sp. (strain MR-7).